The primary structure comprises 205 residues: Polyamine-modulated factor 1 (205 aa).

The tract at residues 1–28 is disordered; it reads MAEASSVNVGSGCAEKGPEELSQEPARP. Residues 140 to 190 are a coiled coil; sequence YLLQQRDALQRRVQRQEAENRQLADAVLAGRRQLEELQLQAQARQQAWQAL.

Component of the MIS12 complex composed of MIS12, DSN1, NSL1 and PMF1. Interacts with COPS7A. Interacts via its coiled-coil domain with the leucine-zipper domain of NFE2L2. The interaction with NFE2L2 is required for the transcriptional regulation of SSAT.

It localises to the nucleus. The protein resides in the chromosome. Its subcellular location is the centromere. The protein localises to the kinetochore. Functionally, part of the MIS12 complex which is required for normal chromosome alignment and segregation and kinetochore formation during mitosis. May act as a cotranscription partner of NFE2L2 involved in regulation of polyamine-induced transcription of SSAT. In Bos taurus (Bovine), this protein is Polyamine-modulated factor 1 (PMF1).